The chain runs to 141 residues: Putative nickel-responsive regulator (141 aa).

The Ni(2+) site is built by His-80, His-91, His-93, and Cys-99.

The protein belongs to the transcriptional regulatory CopG/NikR family. As to quaternary structure, homotetramer. Requires Ni(2+) as cofactor.

Functionally, transcriptional regulator. The sequence is that of Putative nickel-responsive regulator from Methanocaldococcus jannaschii (strain ATCC 43067 / DSM 2661 / JAL-1 / JCM 10045 / NBRC 100440) (Methanococcus jannaschii).